The following is a 109-amino-acid chain: Peptide chaperone MftB (109 aa).

The protein belongs to the peptide chaperone MftB family. As to quaternary structure, interacts with MftA and MftC.

Functionally, peptide chaperone involved in the biosynthesis of the enzyme cofactor mycofactocin (MFT). Binds MftA and MftC with high affinity, and is essential for MftC activity on MftA, likely via the formation of a ternary complex. This chain is Peptide chaperone MftB, found in Mycobacterium ulcerans (strain Agy99).